Consider the following 171-residue polypeptide: uncharacterized protein (171 aa).

An N-terminal signal peptide occupies residues 1-20 (MRDFYLFLGAVFLLVLGVWA).

This is an uncharacterized protein from Aquifex aeolicus (strain VF5).